A 283-amino-acid chain; its full sequence is NAD kinase (283 aa).

Catalysis depends on aspartate 66, which acts as the Proton acceptor. Residues 66–67, 140–141, arginine 151, arginine 168, aspartate 170, and glutamine 240 each bind NAD(+); these read DG and ND.

The protein belongs to the NAD kinase family. The cofactor is a divalent metal cation.

It localises to the cytoplasm. It catalyses the reaction NAD(+) + ATP = ADP + NADP(+) + H(+). Involved in the regulation of the intracellular balance of NAD and NADP, and is a key enzyme in the biosynthesis of NADP. Catalyzes specifically the phosphorylation on 2'-hydroxyl of the adenosine moiety of NAD to yield NADP. The protein is NAD kinase of Syntrophobacter fumaroxidans (strain DSM 10017 / MPOB).